The primary structure comprises 212 residues: Adenylate kinase (212 aa).

An ATP-binding site is contributed by 10-15; it reads GAGKGT. The tract at residues 30 to 59 is NMP; that stretch reads STGDMFRAAMANQTEMGVLAKSYIDKGELV. AMP contacts are provided by residues T31, R36, 57-59, 86-89, and Q93; these read ELV and GYPR. The LID stretch occupies residues 127-159; the sequence is GRIIHRVTGETFHKVFNPPVDYKEEDYYQREDD. ATP contacts are provided by residues R128 and 137 to 138; that span reads TF. Positions 156 and 167 each coordinate AMP. Residue Q195 coordinates ATP.

It belongs to the adenylate kinase family. In terms of assembly, monomer.

It localises to the cytoplasm. It carries out the reaction AMP + ATP = 2 ADP. It functions in the pathway purine metabolism; AMP biosynthesis via salvage pathway; AMP from ADP: step 1/1. Its function is as follows. Catalyzes the reversible transfer of the terminal phosphate group between ATP and AMP. Plays an important role in cellular energy homeostasis and in adenine nucleotide metabolism. The sequence is that of Adenylate kinase from Streptococcus pneumoniae (strain JJA).